The following is a 413-amino-acid chain: Argininosuccinate synthase (413 aa).

ATP contacts are provided by residues 14 to 22 and alanine 41; that span reads AYSGGLDTS. Tyrosine 94 and serine 99 together coordinate L-citrulline. Residue glycine 124 coordinates ATP. L-aspartate contacts are provided by threonine 126, asparagine 130, and aspartate 131. Asparagine 130 lines the L-citrulline pocket. The L-citrulline site is built by arginine 134, serine 185, serine 194, glutamate 270, and tyrosine 282.

This sequence belongs to the argininosuccinate synthase family. Type 1 subfamily. Homotetramer.

The protein localises to the cytoplasm. The enzyme catalyses L-citrulline + L-aspartate + ATP = 2-(N(omega)-L-arginino)succinate + AMP + diphosphate + H(+). It participates in amino-acid biosynthesis; L-arginine biosynthesis; L-arginine from L-ornithine and carbamoyl phosphate: step 2/3. This chain is Argininosuccinate synthase, found in Hyphomonas neptunium (strain ATCC 15444).